Reading from the N-terminus, the 395-residue chain is Acetylornithine aminotransferase (395 aa).

Residues 117 to 118 (GA) and F144 each bind pyridoxal 5'-phosphate. R147 lines the N(2)-acetyl-L-ornithine pocket. Residue 230–233 (DEVQ) coordinates pyridoxal 5'-phosphate. K259 is modified (N6-(pyridoxal phosphate)lysine). N(2)-acetyl-L-ornithine is bound at residue S285. T286 contributes to the pyridoxal 5'-phosphate binding site.

Belongs to the class-III pyridoxal-phosphate-dependent aminotransferase family. ArgD subfamily. Homodimer. Requires pyridoxal 5'-phosphate as cofactor.

Its subcellular location is the cytoplasm. The catalysed reaction is N(2)-acetyl-L-ornithine + 2-oxoglutarate = N-acetyl-L-glutamate 5-semialdehyde + L-glutamate. The protein operates within amino-acid biosynthesis; L-arginine biosynthesis; N(2)-acetyl-L-ornithine from L-glutamate: step 4/4. The protein is Acetylornithine aminotransferase of Methanosarcina acetivorans (strain ATCC 35395 / DSM 2834 / JCM 12185 / C2A).